A 54-amino-acid chain; its full sequence is ATP synthase protein 8 (54 aa).

The helical transmembrane segment at 9-29 (WIINFFIVWTADFTLLIVLSI) threads the bilayer.

Belongs to the ATPase protein 8 family. In terms of assembly, F-type ATPases have 2 components, CF(1) - the catalytic core - and CF(0) - the membrane proton channel.

Its subcellular location is the mitochondrion membrane. In terms of biological role, mitochondrial membrane ATP synthase (F(1)F(0) ATP synthase or Complex V) produces ATP from ADP in the presence of a proton gradient across the membrane which is generated by electron transport complexes of the respiratory chain. F-type ATPases consist of two structural domains, F(1) - containing the extramembraneous catalytic core and F(0) - containing the membrane proton channel, linked together by a central stalk and a peripheral stalk. During catalysis, ATP synthesis in the catalytic domain of F(1) is coupled via a rotary mechanism of the central stalk subunits to proton translocation. Part of the complex F(0) domain. Minor subunit located with subunit a in the membrane. This chain is ATP synthase protein 8 (MT-ATP8), found in Arbacia lixula (Black urchin).